Reading from the N-terminus, the 378-residue chain is Carbamoyl phosphate synthase small chain (378 aa).

Residues 1–189 (MTKPAILALA…DSHPTIDAAD (189 aa)) form a CPSase region. Residues S47, G241, and G243 each coordinate L-glutamine. In terms of domain architecture, Glutamine amidotransferase type-1 spans 193-378 (HVVAFDYGVK…RFTDAMAKRR (186 aa)). C269 functions as the Nucleophile in the catalytic mechanism. L-glutamine-binding residues include L270, Q273, N311, G313, and F314. Catalysis depends on residues H353 and E355.

Belongs to the CarA family. As to quaternary structure, composed of two chains; the small (or glutamine) chain promotes the hydrolysis of glutamine to ammonia, which is used by the large (or ammonia) chain to synthesize carbamoyl phosphate. Tetramer of heterodimers (alpha,beta)4.

The enzyme catalyses hydrogencarbonate + L-glutamine + 2 ATP + H2O = carbamoyl phosphate + L-glutamate + 2 ADP + phosphate + 2 H(+). It carries out the reaction L-glutamine + H2O = L-glutamate + NH4(+). The protein operates within amino-acid biosynthesis; L-arginine biosynthesis; carbamoyl phosphate from bicarbonate: step 1/1. It participates in pyrimidine metabolism; UMP biosynthesis via de novo pathway; (S)-dihydroorotate from bicarbonate: step 1/3. In terms of biological role, small subunit of the glutamine-dependent carbamoyl phosphate synthetase (CPSase). CPSase catalyzes the formation of carbamoyl phosphate from the ammonia moiety of glutamine, carbonate, and phosphate donated by ATP, constituting the first step of 2 biosynthetic pathways, one leading to arginine and/or urea and the other to pyrimidine nucleotides. The small subunit (glutamine amidotransferase) binds and cleaves glutamine to supply the large subunit with the substrate ammonia. The polypeptide is Carbamoyl phosphate synthase small chain (Pseudomonas putida (strain ATCC 47054 / DSM 6125 / CFBP 8728 / NCIMB 11950 / KT2440)).